A 241-amino-acid polypeptide reads, in one-letter code: Adapter protein MecA (241 aa).

Positions 115–141 are disordered; the sequence is TDSNDKNNDDSSYMSDGNPADLNGYAN.

It belongs to the MecA family. Homodimer.

Enables the recognition and targeting of unfolded and aggregated proteins to the ClpC protease or to other proteins involved in proteolysis. The protein is Adapter protein MecA of Pediococcus pentosaceus (strain ATCC 25745 / CCUG 21536 / LMG 10740 / 183-1w).